The chain runs to 152 residues: Atypical leghemoglobin 2-1 (152 aa).

In terms of domain architecture, Globin spans threonine 3 to serine 152. Tyrosine 31 carries the post-translational modification Nitrated tyrosine. Serine 46 is a heme b binding site. Position 46 is a phosphoserine (serine 46). Histidine 64 is a binding site for O2. Heme b contacts are provided by lysine 67, histidine 99, and arginine 102. Tyrosine 140 bears the Nitrated tyrosine mark.

This sequence belongs to the plant globin family. As to quaternary structure, monomer. Nitrated in effective nodules and particularly in hypoxic conditions; this mechanism may play a protective role in the symbiosis by buffering toxic peroxynitrite NO(2)(-). Nitration level decrease during nodule senescence. In terms of processing, phosphorylation at Ser-46 disrupts the molecular environment of its porphyrin ring oxygen binding pocket, thus leading to a reduced oxygen consumption and to the delivery of oxygen O(2) to symbiosomes. As to expression, mainly expressed in leaves and, at low levels, in roots of non-nodulated plants. However, accumulates also in nodules and roots, and, to a lower extent, in leaves, stems, flowers and fruits, in nodulated plants.

Atypical leghemoglobin that reversibly binds oxygen O(2) through a pentacoordinated heme iron. In nodules, facilitates the diffusion of oxygen to the bacteroids while preventing the bacterial nitrogenase from being inactivated by buffering dioxygen, nitric oxide and carbon monoxide. This role is essential for symbiotic nitrogen fixation (SNF). Seems not restricted to symbiotic nitrogen fixation and root nodules formation, but also contributes to general plant development and metabolism. The protein is Atypical leghemoglobin 2-1 of Lotus japonicus (Lotus corniculatus var. japonicus).